We begin with the raw amino-acid sequence, 252 residues long: MAAAKRKLVFDSPNESSVNFETSPNFPKEWKIDGMDIENRIRNFRDELQAQGLCPVGSAGIDPKSKFRTEYRRIVNANTILTDVLRLQQKEGEWLKNASGLLEYDIQSLHARRDHLDNAVEQLKSQLSRLDSSVAILKSQQMAVKSVLELREDEYLADDADSNLPDEFLKFSKISKLCAASLQSYENVKKRNEEMQKELIAERNRQRKLHDATMKMMEEKERVRVEQLEDLFKDFSLEQLTRLRDRIRQAQK.

Positions 106–140 form a coiled coil; it reads IQSLHARRDHLDNAVEQLKSQLSRLDSSVAILKSQ.

This is an uncharacterized protein from Caenorhabditis elegans.